Consider the following 361-residue polypeptide: Chorismate synthase (361 aa).

Residues arginine 48 and arginine 54 each coordinate NADP(+). Residues 125–127, 238–239, glycine 278, 293–297, and arginine 319 contribute to the FMN site; these read RSS, NA, and KPTSS.

Belongs to the chorismate synthase family. As to quaternary structure, homotetramer. It depends on FMNH2 as a cofactor.

The enzyme catalyses 5-O-(1-carboxyvinyl)-3-phosphoshikimate = chorismate + phosphate. It participates in metabolic intermediate biosynthesis; chorismate biosynthesis; chorismate from D-erythrose 4-phosphate and phosphoenolpyruvate: step 7/7. In terms of biological role, catalyzes the anti-1,4-elimination of the C-3 phosphate and the C-6 proR hydrogen from 5-enolpyruvylshikimate-3-phosphate (EPSP) to yield chorismate, which is the branch point compound that serves as the starting substrate for the three terminal pathways of aromatic amino acid biosynthesis. This reaction introduces a second double bond into the aromatic ring system. The sequence is that of Chorismate synthase from Citrobacter koseri (strain ATCC BAA-895 / CDC 4225-83 / SGSC4696).